Reading from the N-terminus, the 187-residue chain is dCTP deaminase (187 aa).

DCTP-binding positions include 110–115 (KSTYAR), 134–136 (TLE), Gln-155, Tyr-169, and Gln-179. The active-site Proton donor/acceptor is Glu-136.

Belongs to the dCTP deaminase family. Homotrimer.

The catalysed reaction is dCTP + H2O + H(+) = dUTP + NH4(+). It functions in the pathway pyrimidine metabolism; dUMP biosynthesis; dUMP from dCTP (dUTP route): step 1/2. Its function is as follows. Catalyzes the deamination of dCTP to dUTP. The polypeptide is dCTP deaminase (Bordetella bronchiseptica (strain ATCC BAA-588 / NCTC 13252 / RB50) (Alcaligenes bronchisepticus)).